The sequence spans 242 residues: uncharacterized protein (242 aa).

Positions 3–116 (TALVIDDEPF…RLRKTVKRLS (114 aa)) constitute a Response regulatory domain. 4-aspartylphosphate is present on aspartate 54. One can recognise an HTH LytTR-type domain in the interval 139–240 (IPCIGHNRIV…LKLLKEMLGL (102 aa)).

This is an uncharacterized protein from Vibrio vulnificus (strain CMCP6).